Here is a 99-residue protein sequence, read N- to C-terminus: Defensin-A4 (99 aa).

Positions Met1–Gly21 are cleaved as a signal peptide. Positions Ala22–Val68 are excised as a propeptide. 3 cysteine pairs are disulfide-bonded: Cys73-Cys97, Cys75-Cys89, and Cys79-Cys96.

It belongs to the alpha-defensin family. As to expression, lowly expressed in spleen, and expressed at lower levels in kidney and lung.

The protein localises to the secreted. Functionally, has antimicrobial activity. This Ornithorhynchus anatinus (Duckbill platypus) protein is Defensin-A4.